We begin with the raw amino-acid sequence, 162 residues long: Ribosome maturation factor RimM (162 aa).

A PRC barrel domain is found at 91–162; sequence DGSFYIDDLI…LIDVVIIEGM (72 aa).

It belongs to the RimM family. In terms of assembly, binds ribosomal protein uS19.

Its subcellular location is the cytoplasm. In terms of biological role, an accessory protein needed during the final step in the assembly of 30S ribosomal subunit, possibly for assembly of the head region. Essential for efficient processing of 16S rRNA. May be needed both before and after RbfA during the maturation of 16S rRNA. It has affinity for free ribosomal 30S subunits but not for 70S ribosomes. The protein is Ribosome maturation factor RimM of Finegoldia magna (strain ATCC 29328 / DSM 20472 / WAL 2508) (Peptostreptococcus magnus).